A 332-amino-acid polypeptide reads, in one-letter code: Malate dehydrogenase (332 aa).

15–21 is an NAD(+) binding site; the sequence is GAAGHIG. 2 residues coordinate substrate: arginine 96 and arginine 102. Residues asparagine 109 and 133-135 contribute to the NAD(+) site; that span reads VGN. Substrate contacts are provided by asparagine 135 and arginine 166. Residue histidine 191 is the Proton acceptor of the active site.

Belongs to the LDH/MDH superfamily. MDH type 2 family.

It carries out the reaction (S)-malate + NAD(+) = oxaloacetate + NADH + H(+). Functionally, catalyzes the reversible oxidation of malate to oxaloacetate. In Mycolicibacterium vanbaalenii (strain DSM 7251 / JCM 13017 / BCRC 16820 / KCTC 9966 / NRRL B-24157 / PYR-1) (Mycobacterium vanbaalenii), this protein is Malate dehydrogenase.